Consider the following 103-residue polypeptide: Large ribosomal subunit protein bL21 (103 aa).

This sequence belongs to the bacterial ribosomal protein bL21 family. Part of the 50S ribosomal subunit. Contacts protein L20.

This protein binds to 23S rRNA in the presence of protein L20. The sequence is that of Large ribosomal subunit protein bL21 from Idiomarina loihiensis (strain ATCC BAA-735 / DSM 15497 / L2-TR).